A 296-amino-acid chain; its full sequence is Cytidine deaminase (296 aa).

CMP/dCMP-type deaminase domains lie at 47-167 (ELNE…FGPS) and 186-296 (DSND…VEPE). 88–90 (NIE) contacts substrate. His101 is a Zn(2+) binding site. Glu103 (proton donor) is an active-site residue. Positions 128 and 131 each coordinate Zn(2+).

It belongs to the cytidine and deoxycytidylate deaminase family. In terms of assembly, homodimer. It depends on Zn(2+) as a cofactor.

The catalysed reaction is cytidine + H2O + H(+) = uridine + NH4(+). It catalyses the reaction 2'-deoxycytidine + H2O + H(+) = 2'-deoxyuridine + NH4(+). This enzyme scavenges exogenous and endogenous cytidine and 2'-deoxycytidine for UMP synthesis. The sequence is that of Cytidine deaminase from Shewanella halifaxensis (strain HAW-EB4).